A 236-amino-acid chain; its full sequence is Exosome complex component Rrp4 (236 aa).

One can recognise an S1 motif domain in the interval 64 to 133 (GDKVIGKIIE…EIKESWLTLK (70 aa)). In terms of domain architecture, KH spans 141–199 (EGGHMVLIHASRVPRVIGKGGGMVNMVKELTSTRIIIGQNGLIWIDGPIEGVTMAIAAI).

The protein belongs to the RRP4 family. In terms of assembly, component of the archaeal exosome complex. Forms a trimer of Rrp4 and/or Csl4 subunits. The trimer associates with a hexameric ring-like arrangement composed of 3 Rrp41-Rrp42 heterodimers.

It localises to the cytoplasm. Its function is as follows. Non-catalytic component of the exosome, which is a complex involved in RNA degradation. Increases the RNA binding and the efficiency of RNA degradation. Confers strong poly(A) specificity to the exosome. This chain is Exosome complex component Rrp4, found in Thermoplasma volcanium (strain ATCC 51530 / DSM 4299 / JCM 9571 / NBRC 15438 / GSS1).